We begin with the raw amino-acid sequence, 345 residues long: MNDVFIIAGPTASGKSELAMLLAQKFNGVIINADSMQIYKEIPIITASPSISEKKQVDHYLYNYVSIFHSDINELNSFDNISQSKVNANYNNINLQQSITKHLTDRRYSVAQYVQEACKIIRSVIHALKLPIVVGGSGMYIKALVYGIHHIPEITCEIRMQVQDLYKKLTKQEFYQKLIDLDPISKNYIHSSDAQRMIRAYEVALQTNKSIFSYHNSKLVSPLECYNVKKIILLPDRQLLYQNCNQRFAKLATNGELVDEITKIKPYYDHISISAKKALGINEIISYLNQELTIEEAITIAQQKIRQYAKRQLTWFRNQTINGYTLHYQSMSELYKAQVNDVFFN.

9-16 (GPTASGKS) lines the ATP pocket. 11–16 (TASGKS) is a binding site for substrate. Interaction with substrate tRNA stretches follow at residues 34–37 (DSMQ) and 195–199 (QRMIR).

Belongs to the IPP transferase family. As to quaternary structure, monomer. Mg(2+) is required as a cofactor.

The enzyme catalyses adenosine(37) in tRNA + dimethylallyl diphosphate = N(6)-dimethylallyladenosine(37) in tRNA + diphosphate. Catalyzes the transfer of a dimethylallyl group onto the adenine at position 37 in tRNAs that read codons beginning with uridine, leading to the formation of N6-(dimethylallyl)adenosine (i(6)A). The sequence is that of tRNA dimethylallyltransferase from Orientia tsutsugamushi (strain Boryong) (Rickettsia tsutsugamushi).